A 99-amino-acid polypeptide reads, in one-letter code: CLAVATA3/ESR (CLE)-related protein 11 (99 aa).

Positions 1–31 (MTKQPKPCSFLFHISLLSALFVFLLISFAFT) are cleaved as a signal peptide. Pro91 and Pro94 each carry hydroxyproline. Pro94 carries an O-linked (Ara...) hydroxyproline glycan.

It belongs to the CLV3/ESR signal peptide family. In terms of processing, the O-glycosylation (arabinosylation) of the hydroxyproline Pro-94 enhances binding affinity of the CLE11p peptide for its receptor. Mostly expressed in seedlings, roots and siliques, and, to a lower extent, in leaves, flowers, stems and apex.

The protein resides in the secreted. It is found in the extracellular space. Extracellular signal peptide that regulates cell fate. Represses root apical meristem maintenance. Regulates the transition of protophloem cells from proliferation to differentiation, thus impinging on postembryonic growth capacity of the root meristem; this signaling pathway requires CRN and CLV2. The polypeptide is CLAVATA3/ESR (CLE)-related protein 11 (Arabidopsis thaliana (Mouse-ear cress)).